The chain runs to 287 residues: Large ribosomal subunit protein uL2 (287 aa).

The segment at 214–287 (LGRRPEVRGS…SKRGRGGRDA (74 aa)) is disordered. The span at 271–287 (QRRRRKSSKRGRGGRDA) shows a compositional bias: basic residues.

Belongs to the universal ribosomal protein uL2 family. Part of the 50S ribosomal subunit. Forms a bridge to the 30S subunit in the 70S ribosome.

One of the primary rRNA binding proteins. Required for association of the 30S and 50S subunits to form the 70S ribosome, for tRNA binding and peptide bond formation. It has been suggested to have peptidyltransferase activity; this is somewhat controversial. Makes several contacts with the 16S rRNA in the 70S ribosome. This chain is Large ribosomal subunit protein uL2, found in Synechococcus elongatus (strain ATCC 33912 / PCC 7942 / FACHB-805) (Anacystis nidulans R2).